A 1073-amino-acid polypeptide reads, in one-letter code: Carbamoyl phosphate synthase large chain (1073 aa).

The carboxyphosphate synthetic domain stretch occupies residues 2 to 403 (PKRTDIKSIL…SVQKALRGLE (402 aa)). Positions 129, 169, 175, 176, 208, 210, 215, 241, 242, 243, 285, and 299 each coordinate ATP. Residues 133–328 (DKAMKDIGLA…IAKIAAKLAV (196 aa)) form the ATP-grasp 1 domain. Gln285, Glu299, and Asn301 together coordinate Mg(2+). Mn(2+) contacts are provided by Gln285, Glu299, and Asn301. The interval 404–553 (VGATGFDPKL…YSTYEEECEA (150 aa)) is oligomerization domain. Positions 554–935 (NPSSREKIMI…AFAKAQLGAS (382 aa)) are carbamoyl phosphate synthetic domain. The ATP-grasp 2 domain maps to 678 to 869 (QQMVQRLNLR…LAKVAARVMA (192 aa)). The ATP site is built by Arg714, His753, Leu755, Glu760, Gly785, Val786, His787, Ser788, Gln828, and Glu840. 3 residues coordinate Mg(2+): Gln828, Glu840, and Asn842. Residues Gln828, Glu840, and Asn842 each contribute to the Mn(2+) site. Residues 936 to 1073 (EILPTAGCAF…LQDLHAGIKA (138 aa)) form the MGS-like domain. The interval 936 to 1073 (EILPTAGCAF…LQDLHAGIKA (138 aa)) is allosteric domain.

Belongs to the CarB family. As to quaternary structure, composed of two chains; the small (or glutamine) chain promotes the hydrolysis of glutamine to ammonia, which is used by the large (or ammonia) chain to synthesize carbamoyl phosphate. Tetramer of heterodimers (alpha,beta)4. The cofactor is Mg(2+). It depends on Mn(2+) as a cofactor.

It catalyses the reaction hydrogencarbonate + L-glutamine + 2 ATP + H2O = carbamoyl phosphate + L-glutamate + 2 ADP + phosphate + 2 H(+). The enzyme catalyses hydrogencarbonate + NH4(+) + 2 ATP = carbamoyl phosphate + 2 ADP + phosphate + 2 H(+). It functions in the pathway amino-acid biosynthesis; L-arginine biosynthesis; carbamoyl phosphate from bicarbonate: step 1/1. Its pathway is pyrimidine metabolism; UMP biosynthesis via de novo pathway; (S)-dihydroorotate from bicarbonate: step 1/3. Large subunit of the glutamine-dependent carbamoyl phosphate synthetase (CPSase). CPSase catalyzes the formation of carbamoyl phosphate from the ammonia moiety of glutamine, carbonate, and phosphate donated by ATP, constituting the first step of 2 biosynthetic pathways, one leading to arginine and/or urea and the other to pyrimidine nucleotides. The large subunit (synthetase) binds the substrates ammonia (free or transferred from glutamine from the small subunit), hydrogencarbonate and ATP and carries out an ATP-coupled ligase reaction, activating hydrogencarbonate by forming carboxy phosphate which reacts with ammonia to form carbamoyl phosphate. The protein is Carbamoyl phosphate synthase large chain of Pseudomonas aeruginosa (strain ATCC 15692 / DSM 22644 / CIP 104116 / JCM 14847 / LMG 12228 / 1C / PRS 101 / PAO1).